Reading from the N-terminus, the 61-residue chain is Large ribosomal subunit protein uL30 (61 aa).

This sequence belongs to the universal ribosomal protein uL30 family. As to quaternary structure, part of the 50S ribosomal subunit.

The chain is Large ribosomal subunit protein uL30 from Acidithiobacillus ferrooxidans (strain ATCC 23270 / DSM 14882 / CIP 104768 / NCIMB 8455) (Ferrobacillus ferrooxidans (strain ATCC 23270)).